Consider the following 514-residue polypeptide: Maturase K (514 aa).

It belongs to the intron maturase 2 family. MatK subfamily.

The protein localises to the plastid. The protein resides in the chloroplast. Usually encoded in the trnK tRNA gene intron. Probably assists in splicing its own and other chloroplast group II introns. This chain is Maturase K, found in Tsuga canadensis (Eastern hemlock).